The primary structure comprises 173 residues: Crossover junction endodeoxyribonuclease RuvC (173 aa).

Active-site residues include Asp8, Glu67, and Asp139. Mg(2+) contacts are provided by Asp8, Glu67, and Asp139.

Belongs to the RuvC family. In terms of assembly, homodimer which binds Holliday junction (HJ) DNA. The HJ becomes 2-fold symmetrical on binding to RuvC with unstacked arms; it has a different conformation from HJ DNA in complex with RuvA. In the full resolvosome a probable DNA-RuvA(4)-RuvB(12)-RuvC(2) complex forms which resolves the HJ. Mg(2+) serves as cofactor.

Its subcellular location is the cytoplasm. The catalysed reaction is Endonucleolytic cleavage at a junction such as a reciprocal single-stranded crossover between two homologous DNA duplexes (Holliday junction).. The RuvA-RuvB-RuvC complex processes Holliday junction (HJ) DNA during genetic recombination and DNA repair. Endonuclease that resolves HJ intermediates. Cleaves cruciform DNA by making single-stranded nicks across the HJ at symmetrical positions within the homologous arms, yielding a 5'-phosphate and a 3'-hydroxyl group; requires a central core of homology in the junction. The consensus cleavage sequence is 5'-(A/T)TT(C/G)-3'. Cleavage occurs on the 3'-side of the TT dinucleotide at the point of strand exchange. HJ branch migration catalyzed by RuvA-RuvB allows RuvC to scan DNA until it finds its consensus sequence, where it cleaves and resolves the cruciform DNA. This chain is Crossover junction endodeoxyribonuclease RuvC, found in Cronobacter sakazakii (strain ATCC BAA-894) (Enterobacter sakazakii).